Consider the following 180-residue polypeptide: Der GTPase-activating protein YihI (180 aa).

Polar residues predominate over residues 1 to 10; the sequence is MKQPARTSQV. Disordered stretches follow at residues 1-102 and 158-180; these read MKQP…PRLT and DAED…RTPE. The span at 21–32 shows a compositional bias: basic and acidic residues; it reads TREEINQEARDR. Over residues 45 to 54 the composition is skewed to polar residues; sequence SRANPATVSQ. Basic and acidic residues predominate over residues 55–67; it reads KGDKSQSVKDPRI. Over residues 84 to 93 the composition is skewed to low complexity; it reads PANPVKAAKP.

It belongs to the YihI family. In terms of assembly, interacts with Der.

Functionally, a GTPase-activating protein (GAP) that modifies Der/EngA GTPase function. May play a role in ribosome biogenesis. In Erwinia tasmaniensis (strain DSM 17950 / CFBP 7177 / CIP 109463 / NCPPB 4357 / Et1/99), this protein is Der GTPase-activating protein YihI.